An 886-amino-acid polypeptide reads, in one-letter code: MAELPQSRINERNITSEMRESFLDYAMSVIVARALPDVRDGLKPVHRRILYGLNEQGMTPDKSYKKSARIVGDVMGKYHPHGDLSIYEAMVRMAQDFSYRYPLVDGQGNFGSMDGDGAAAMRYTEARMTKITLELLRDINKDTIDFIDNYDGNEREPSVLPARFPNLLANGASGIAVGMATNIPPHNLTELINGVLSLSKNPDISIAELMEDIEGPDFPTAGLILGKSGIRRAYETGRGSIQMRSRAVIEERGGGRQRIVVTEIPFQVNKARMIEKIAELVRDKKIDGITDLRDETSLRTGVRVVIDVRKDANASVILNNLYKQTPLQTSFGVNMIALVNGRPKLINLKEALVHYLEHQKTVVRRRTQYNLRKAKDRAHILEGLRIALDHIDEIISTIRESETDKVAMESLQQRFKLSEKQAQAILDMRLRRLTGLERDKIEAEYNELLNYISELEAILADEEVLLQLVRDELTEIRDRFGDDRRTEIQLGGFEDLEDEDLIPEEQIVITLSHNNYIKRLPVSTYRAQNRGGRGVQGMNTLEEDFVSQLVTLSTHDHVLFFTNKGRVYKLKGYEVPELSRQSKGIPVVNAIELENDEIISTMIAVKDLESEDNFLVFATKRGVVKRSALSNFSRINRNGKIAISFREDDELIAVRLTSGQEDILIGTSHASLIRFPESTLRPLGRTATGVKGITLREGDEVVGLDVAHANSVDEVLVVTENGYGKRTPVNDYRLSNRGGKGIKTATITERNGNVVCITTVTGEEDLMIVTNAGVIIRLDVADISQNGRAAQGVRLIRLGDDQFVSTVAKVKEDADEENEDEQSTVSEDGTEQQREAVVNDETPGNAIHTEVIDSEVNDEDGRIEVRQDFMDRVEEDIQQSSDDDEE.

Residues 35–501 (LPDVRDGLKP…GFEDLEDEDL (467 aa)) enclose the Topo IIA-type catalytic domain. Tyrosine 123 (O-(5'-phospho-DNA)-tyrosine intermediate) is an active-site residue. The GyrA-box signature appears at 528–534 (QNRGGRG). The interval 810-860 (VKEDADEENEDEQSTVSEDGTEQQREAVVNDETPGNAIHTEVIDSEVNDED) is disordered. The span at 813-822 (DADEENEDEQ) shows a compositional bias: acidic residues.

The protein belongs to the type II topoisomerase GyrA/ParC subunit family. As to quaternary structure, heterotetramer, composed of two GyrA and two GyrB chains. In the heterotetramer, GyrA contains the active site tyrosine that forms a transient covalent intermediate with DNA, while GyrB binds cofactors and catalyzes ATP hydrolysis.

The protein localises to the cytoplasm. The enzyme catalyses ATP-dependent breakage, passage and rejoining of double-stranded DNA.. Functionally, a type II topoisomerase that negatively supercoils closed circular double-stranded (ds) DNA in an ATP-dependent manner to modulate DNA topology and maintain chromosomes in an underwound state. Negative supercoiling favors strand separation, and DNA replication, transcription, recombination and repair, all of which involve strand separation. Also able to catalyze the interconversion of other topological isomers of dsDNA rings, including catenanes and knotted rings. Type II topoisomerases break and join 2 DNA strands simultaneously in an ATP-dependent manner. The protein is DNA gyrase subunit A of Staphylococcus aureus (strain MRSA252).